Consider the following 223-residue polypeptide: Protein-disulfide oxidoreductase DsbI (223 aa).

Residues 26 to 46 (LLWLLMAVAMGALIILAHSFF) form a helical membrane-spanning segment. Cysteine 55 and cysteine 58 form a disulfide bridge. The next 2 helical transmembrane spans lie at 59–78 (VYIRYAMFVMVIGGLVAAIN) and 82–102 (IILKLIGCVMAFYGSILGLKF). A disulfide bridge links cysteine 127 with cysteine 153. The chain crosses the membrane as a helical span at residues 198–218 (CMLAFGMCLVLLVIMSGAWAL).

This sequence belongs to the DsbB family. DsbI subfamily. As to quaternary structure, interacts with DsbL.

The protein resides in the cell inner membrane. Required for disulfide bond formation in some proteins. Part of a redox system composed of DsbI and DsbL that mediates formation of an essential disulfide bond in AssT. This chain is Protein-disulfide oxidoreductase DsbI, found in Escherichia coli O1:K1 / APEC.